Reading from the N-terminus, the 364-residue chain is MSKKIYIGAMTGTSHDAIDISFLSIGTKIHLEYFHSIKFPKSLRLKVKKLIENNESSLSDLGTINKEIGFLFSKSINEAIGFSKIKKSSIECVAISGQTIRHEINKRFPFSMQIGDPNIVAKETGLLVVSDFRNMHIALGGEGAPLVPEFHNQLFYKARNPRIILNIGGISNYSFVKNRNDIWGTDVGPGNAILDAYCSDFLQIPFDKNGAIAAKGKVDHIELGRLLQNNFFKRKCPKSTGKELFNIKILSKKFLKKKAEDILCTLVEFSAKSIINSIHKNGHNNCDIVICGGGAHNKYLVKRISEMASNDIVLSSDLGHDVFAIESMAFAWMGYKRVSNEALIVQTSSKNVKGLLGSITKSKL.

Residue 12–19 participates in ATP binding; the sequence is GTSHDAID.

This sequence belongs to the anhydro-N-acetylmuramic acid kinase family.

The catalysed reaction is 1,6-anhydro-N-acetyl-beta-muramate + ATP + H2O = N-acetyl-D-muramate 6-phosphate + ADP + H(+). It participates in amino-sugar metabolism; 1,6-anhydro-N-acetylmuramate degradation. It functions in the pathway cell wall biogenesis; peptidoglycan recycling. In terms of biological role, catalyzes the specific phosphorylation of 1,6-anhydro-N-acetylmuramic acid (anhMurNAc) with the simultaneous cleavage of the 1,6-anhydro ring, generating MurNAc-6-P. Is required for the utilization of anhMurNAc either imported from the medium or derived from its own cell wall murein, and thus plays a role in cell wall recycling. This is Anhydro-N-acetylmuramic acid kinase from Gamma-proteobacterium EBAC31A08.